The primary structure comprises 234 residues: Peptidase E (234 aa).

Active-site charge relay system residues include serine 123, aspartate 138, and histidine 160.

It belongs to the peptidase S51 family.

Its subcellular location is the cytoplasm. The catalysed reaction is Dipeptidase E catalyzes the hydrolysis of dipeptides Asp-|-Xaa. It does not act on peptides with N-terminal Glu, Asn or Gln, nor does it cleave isoaspartyl peptides.. In terms of biological role, hydrolyzes dipeptides containing N-terminal aspartate residues. May play a role in allowing the cell to use peptide aspartate to spare carbon otherwise required for the synthesis of the aspartate family of amino acids. The chain is Peptidase E from Pasteurella multocida (strain Pm70).